The following is a 257-amino-acid chain: Acyl-[acyl-carrier-protein]--UDP-N-acetylglucosamine O-acyltransferase (257 aa).

Belongs to the transferase hexapeptide repeat family. LpxA subfamily. As to quaternary structure, homotrimer.

The protein resides in the cytoplasm. The enzyme catalyses a (3R)-hydroxyacyl-[ACP] + UDP-N-acetyl-alpha-D-glucosamine = a UDP-3-O-[(3R)-3-hydroxyacyl]-N-acetyl-alpha-D-glucosamine + holo-[ACP]. It participates in glycolipid biosynthesis; lipid IV(A) biosynthesis; lipid IV(A) from (3R)-3-hydroxytetradecanoyl-[acyl-carrier-protein] and UDP-N-acetyl-alpha-D-glucosamine: step 1/6. Involved in the biosynthesis of lipid A, a phosphorylated glycolipid that anchors the lipopolysaccharide to the outer membrane of the cell. This chain is Acyl-[acyl-carrier-protein]--UDP-N-acetylglucosamine O-acyltransferase, found in Anaeromyxobacter sp. (strain Fw109-5).